The chain runs to 93 residues: Co-chaperonin GroES (93 aa).

This sequence belongs to the GroES chaperonin family. As to quaternary structure, heptamer of 7 subunits arranged in a ring. Interacts with the chaperonin GroEL.

The protein localises to the cytoplasm. Together with the chaperonin GroEL, plays an essential role in assisting protein folding. The GroEL-GroES system forms a nano-cage that allows encapsulation of the non-native substrate proteins and provides a physical environment optimized to promote and accelerate protein folding. GroES binds to the apical surface of the GroEL ring, thereby capping the opening of the GroEL channel. This chain is Co-chaperonin GroES, found in Streptococcus anginosus.